Here is a 180-residue protein sequence, read N- to C-terminus: ATP synthase subunit delta (180 aa).

Belongs to the ATPase delta chain family. As to quaternary structure, F-type ATPases have 2 components, F(1) - the catalytic core - and F(0) - the membrane proton channel. F(1) has five subunits: alpha(3), beta(3), gamma(1), delta(1), epsilon(1). F(0) has three main subunits: a(1), b(2) and c(10-14). The alpha and beta chains form an alternating ring which encloses part of the gamma chain. F(1) is attached to F(0) by a central stalk formed by the gamma and epsilon chains, while a peripheral stalk is formed by the delta and b chains.

It is found in the cell membrane. In terms of biological role, f(1)F(0) ATP synthase produces ATP from ADP in the presence of a proton or sodium gradient. F-type ATPases consist of two structural domains, F(1) containing the extramembraneous catalytic core and F(0) containing the membrane proton channel, linked together by a central stalk and a peripheral stalk. During catalysis, ATP synthesis in the catalytic domain of F(1) is coupled via a rotary mechanism of the central stalk subunits to proton translocation. Its function is as follows. This protein is part of the stalk that links CF(0) to CF(1). It either transmits conformational changes from CF(0) to CF(1) or is implicated in proton conduction. The sequence is that of ATP synthase subunit delta from Dehalococcoides mccartyi (strain ATCC BAA-2266 / KCTC 15142 / 195) (Dehalococcoides ethenogenes (strain 195)).